Consider the following 484-residue polypeptide: tRNA sulfurtransferase (484 aa).

Residues Gln-63–Arg-167 form the THUMP domain. ATP is bound by residues Leu-185–Ile-186, Lys-267, Gly-289, and Gln-298. A disulfide bridge links Cys-346 with Cys-458. A Rhodanese domain is found at Ile-406–Pro-484. Catalysis depends on Cys-458, which acts as the Cysteine persulfide intermediate.

This sequence belongs to the ThiI family.

It is found in the cytoplasm. It carries out the reaction [ThiI sulfur-carrier protein]-S-sulfanyl-L-cysteine + a uridine in tRNA + 2 reduced [2Fe-2S]-[ferredoxin] + ATP + H(+) = [ThiI sulfur-carrier protein]-L-cysteine + a 4-thiouridine in tRNA + 2 oxidized [2Fe-2S]-[ferredoxin] + AMP + diphosphate. It catalyses the reaction [ThiS sulfur-carrier protein]-C-terminal Gly-Gly-AMP + S-sulfanyl-L-cysteinyl-[cysteine desulfurase] + AH2 = [ThiS sulfur-carrier protein]-C-terminal-Gly-aminoethanethioate + L-cysteinyl-[cysteine desulfurase] + A + AMP + 2 H(+). It functions in the pathway cofactor biosynthesis; thiamine diphosphate biosynthesis. In terms of biological role, catalyzes the ATP-dependent transfer of a sulfur to tRNA to produce 4-thiouridine in position 8 of tRNAs, which functions as a near-UV photosensor. Also catalyzes the transfer of sulfur to the sulfur carrier protein ThiS, forming ThiS-thiocarboxylate. This is a step in the synthesis of thiazole, in the thiamine biosynthesis pathway. The sulfur is donated as persulfide by IscS. This chain is tRNA sulfurtransferase, found in Shewanella putrefaciens (strain CN-32 / ATCC BAA-453).